Consider the following 386-residue polypeptide: Alcohol dehydrogenase-like 2 (386 aa).

8 residues coordinate Zn(2+): cysteine 51, threonine 53, histidine 74, cysteine 104, cysteine 107, cysteine 110, cysteine 118, and cysteine 183. Residues threonine 53 and histidine 74 each coordinate an alcohol. Threonine 53 serves as a coordination point for NAD(+). NAD(+) is bound by residues 208–213 (GLGAVG), aspartate 232, lysine 237, 302–304 (LGM), phenylalanine 329, and arginine 379.

It belongs to the zinc-containing alcohol dehydrogenase family. Class-III subfamily. As to quaternary structure, homodimer. Requires Zn(2+) as cofactor.

The protein localises to the cytoplasm. The catalysed reaction is a primary alcohol + NAD(+) = an aldehyde + NADH + H(+). The enzyme catalyses a secondary alcohol + NAD(+) = a ketone + NADH + H(+). The sequence is that of Alcohol dehydrogenase-like 2 from Arabidopsis thaliana (Mouse-ear cress).